The following is a 686-amino-acid chain: MAM domain-containing protein 2 (686 aa).

The N-terminal stretch at 1 to 18 is a signal peptide; the sequence is MLLEGVLLVVQALQLASA. MAM domains follow at residues 24-169, 168-329, 340-498, and 507-666; these read GSCA…YCIE, IECD…HCQN, TSCD…NCRS, and GECT…PCAG. N134 and N329 each carry an N-linked (GlcNAc...) asparagine glycan. A glycan (N-linked (GlcNAc...) asparagine) is linked at N524. Residues 665-686 are disordered; sequence AGMEDTTEQSSGYSEDLNEIEY.

Post-translationally, O-glycosylated; contains chondroitin sulfate.

Its subcellular location is the secreted. It is found in the extracellular space. It localises to the extracellular matrix. The chain is MAM domain-containing protein 2 (Mamdc2) from Mus musculus (Mouse).